We begin with the raw amino-acid sequence, 424 residues long: N-succinylarginine dihydrolase (424 aa).

Residues 19–28 (AGLSPGNIAS), asparagine 110, and 137–138 (HR) each bind substrate. Residue glutamate 174 is part of the active site. Arginine 207 contributes to the substrate binding site. Residue histidine 240 is part of the active site. Substrate contacts are provided by aspartate 242 and asparagine 349. Catalysis depends on cysteine 355, which acts as the Nucleophile.

Belongs to the succinylarginine dihydrolase family. Homodimer.

It carries out the reaction N(2)-succinyl-L-arginine + 2 H2O + 2 H(+) = N(2)-succinyl-L-ornithine + 2 NH4(+) + CO2. Its pathway is amino-acid degradation; L-arginine degradation via AST pathway; L-glutamate and succinate from L-arginine: step 2/5. Its function is as follows. Catalyzes the hydrolysis of N(2)-succinylarginine into N(2)-succinylornithine, ammonia and CO(2). The polypeptide is N-succinylarginine dihydrolase (Rhizorhabdus wittichii (strain DSM 6014 / CCUG 31198 / JCM 15750 / NBRC 105917 / EY 4224 / RW1) (Sphingomonas wittichii)).